Here is a 479-residue protein sequence, read N- to C-terminus: Chromosomal replication initiator protein DnaA (479 aa).

The domain I, interacts with DnaA modulators stretch occupies residues 1-71; the sequence is MNLTQIWKAT…RNALARVVGY (71 aa). Residues 71–138 form a domain II region; sequence YPVQVQVLIA…LDLASAMRSG (68 aa). Positions 86-99 are enriched in polar residues; the sequence is TEPSPSLTLSNGSR. The disordered stretch occupies residues 86 to 106; sequence TEPSPSLTLSNGSRLMSDPEP. Residues 139–355 form a domain III, AAA+ region region; sequence MLNPRYTFSS…GSLNRVAAYA (217 aa). The ATP site is built by G183, G185, K186, and T187. The interval 356 to 479 is domain IV, binds dsDNA; sequence ELNRAPITIE…IRERIQMLRG (124 aa).

It belongs to the DnaA family. Oligomerizes as a right-handed, spiral filament on DNA at oriC.

The protein localises to the cytoplasm. In terms of biological role, plays an essential role in the initiation and regulation of chromosomal replication. ATP-DnaA binds to the origin of replication (oriC) to initiate formation of the DNA replication initiation complex once per cell cycle. Binds the DnaA box (a 9 base pair repeat at the origin) and separates the double-stranded (ds)DNA. Forms a right-handed helical filament on oriC DNA; dsDNA binds to the exterior of the filament while single-stranded (ss)DNA is stabiized in the filament's interior. The ATP-DnaA-oriC complex binds and stabilizes one strand of the AT-rich DNA unwinding element (DUE), permitting loading of DNA polymerase. After initiation quickly degrades to an ADP-DnaA complex that is not apt for DNA replication. Binds acidic phospholipids. The chain is Chromosomal replication initiator protein DnaA from Chloroflexus aurantiacus (strain ATCC 29366 / DSM 635 / J-10-fl).